The chain runs to 261 residues: 2,3-dihydro-2,3-dihydroxybenzoate dehydrogenase (261 aa).

12–36 (FITGAAQGIGEAVARTLASQGAHIA) is a binding site for NAD(+). Substrate is bound at residue S144. Y157 serves as the catalytic Proton acceptor.

It belongs to the short-chain dehydrogenases/reductases (SDR) family.

It is found in the cytoplasm. The catalysed reaction is (2S,3S)-2,3-dihydroxy-2,3-dihydrobenzoate + NAD(+) = 2,3-dihydroxybenzoate + NADH + H(+). It participates in siderophore biosynthesis; bacillibactin biosynthesis. This is 2,3-dihydro-2,3-dihydroxybenzoate dehydrogenase (dhbA) from Bacillus subtilis (strain 168).